A 225-amino-acid chain; its full sequence is Uridylate kinase (225 aa).

9–10 (GS) is an ATP binding site. Gly46 serves as a coordination point for UMP. Residues Gly47 and Arg51 each coordinate ATP. UMP-binding positions include Asp67 and 115–121 (THPAHTT). Residues Thr141, Asn142, Tyr147, and Asp150 each coordinate ATP.

The protein belongs to the UMP kinase family. As to quaternary structure, homohexamer.

It is found in the cytoplasm. The catalysed reaction is UMP + ATP = UDP + ADP. The protein operates within pyrimidine metabolism; CTP biosynthesis via de novo pathway; UDP from UMP (UMPK route): step 1/1. With respect to regulation, inhibited by UTP. Catalyzes the reversible phosphorylation of UMP to UDP. In Methanococcus maripaludis (strain C7 / ATCC BAA-1331), this protein is Uridylate kinase.